The primary structure comprises 462 residues: Putative endoglucanase type B (462 aa).

The signal sequence occupies residues 1–16 (MAYKLILAAFAATALA). The 37-residue stretch at 25–61 (CSNGVWAQCGGQNWSGTPCCTSGNKCVKLNDFYSQCQ) folds into the CBM1 domain. 2 cysteine pairs are disulfide-bonded: Cys33-Cys50 and Cys44-Cys60. N-linked (GlcNAc...) asparagine glycosylation is present at Asn37. The segment covering 64 to 100 (SAEPSSTAAGPSSTTATKTTATGGSSTTAGGSVTSAP) has biased composition (low complexity). A disordered region spans residues 64 to 102 (SAEPSSTAAGPSSTTATKTTATGGSSTTAGGSVTSAPPA). Residues 66–99 (EPSSTAAGPSSTTATKTTATGGSSTTAGGSVTSA) form a linker region. The tract at residues 100 to 462 (PPAASDNPYA…LLDNANPSFL (363 aa)) is catalytic. The active site involves Asp190. A disulfide bridge links Cys191 with Cys250. Asn223 carries an N-linked (GlcNAc...) asparagine glycan. The active-site Proton donor is Asp236. 2 N-linked (GlcNAc...) asparagine glycosylation sites follow: Asn272 and Asn317. Cys383 and Cys430 form a disulfide bridge. Asp416 functions as the Nucleophile in the catalytic mechanism.

Belongs to the glycosyl hydrolase 6 (cellulase B) family.

It carries out the reaction Endohydrolysis of (1-&gt;4)-beta-D-glucosidic linkages in cellulose, lichenin and cereal beta-D-glucans.. The sequence is that of Putative endoglucanase type B from Fusarium oxysporum (Fusarium vascular wilt).